Consider the following 298-residue polypeptide: Ribosomal RNA small subunit methyltransferase H (298 aa).

S-adenosyl-L-methionine is bound by residues Gly37 to His39, Asp57, Leu91, Asp105, and Gln112.

Belongs to the methyltransferase superfamily. RsmH family.

The protein localises to the cytoplasm. It carries out the reaction cytidine(1402) in 16S rRNA + S-adenosyl-L-methionine = N(4)-methylcytidine(1402) in 16S rRNA + S-adenosyl-L-homocysteine + H(+). In terms of biological role, specifically methylates the N4 position of cytidine in position 1402 (C1402) of 16S rRNA. The polypeptide is Ribosomal RNA small subunit methyltransferase H (Kosmotoga olearia (strain ATCC BAA-1733 / DSM 21960 / TBF 19.5.1)).